Reading from the N-terminus, the 494-residue chain is Anthranilate synthase component 1 (494 aa).

L-tryptophan-binding positions include S52 and 274-276 (PYM). 309 to 310 (GT) is a chorismate binding site. Mg(2+) is bound at residue E336. Chorismate-binding positions include Y424, R444, 458-460 (GAG), and G460. E473 is a Mg(2+) binding site.

It belongs to the anthranilate synthase component I family. In terms of assembly, heterotetramer consisting of two non-identical subunits: a beta subunit (TrpG) and a large alpha subunit (TrpE). It depends on Mg(2+) as a cofactor.

The enzyme catalyses chorismate + L-glutamine = anthranilate + pyruvate + L-glutamate + H(+). It functions in the pathway amino-acid biosynthesis; L-tryptophan biosynthesis; L-tryptophan from chorismate: step 1/5. Feedback inhibited by tryptophan. Functionally, part of a heterotetrameric complex that catalyzes the two-step biosynthesis of anthranilate, an intermediate in the biosynthesis of L-tryptophan. In the first step, the glutamine-binding beta subunit (TrpG) of anthranilate synthase (AS) provides the glutamine amidotransferase activity which generates ammonia as a substrate that, along with chorismate, is used in the second step, catalyzed by the large alpha subunit of AS (TrpE) to produce anthranilate. In the absence of TrpG, TrpE can synthesize anthranilate directly from chorismate and high concentrations of ammonia. This Aquifex aeolicus (strain VF5) protein is Anthranilate synthase component 1 (trpE).